Here is an 82-residue protein sequence, read N- to C-terminus: Cytochrome b559 subunit alpha (82 aa).

A helical membrane pass occupies residues 22–36; the sequence is VIHAITLPSIFLAGF. Histidine 24 lines the heme pocket.

Belongs to the PsbE/PsbF family. Heterodimer of an alpha subunit and a beta subunit. PSII is composed of 1 copy each of membrane proteins PsbA, PsbB, PsbC, PsbD, PsbE, PsbF, PsbH, PsbI, PsbJ, PsbK, PsbL, PsbM, PsbT, PsbX, PsbY, PsbZ, Psb30/Ycf12, peripheral proteins PsbO, CyanoQ (PsbQ), PsbU, PsbV and a large number of cofactors. It forms dimeric complexes. The cofactor is heme b.

It is found in the cellular thylakoid membrane. Its function is as follows. This b-type cytochrome is tightly associated with the reaction center of photosystem II (PSII). PSII is a light-driven water:plastoquinone oxidoreductase that uses light energy to abstract electrons from H(2)O, generating O(2) and a proton gradient subsequently used for ATP formation. It consists of a core antenna complex that captures photons, and an electron transfer chain that converts photonic excitation into a charge separation. The protein is Cytochrome b559 subunit alpha of Synechococcus sp. (strain CC9311).